The following is a 217-amino-acid chain: 25 kDa ookinete surface antigen (217 aa).

The N-terminal stretch at 1–16 (MNKLYSLFLFLFIQLS) is a signal peptide. One can recognise an EGF-like 1; truncated domain in the interval 30–59 (CKRGFLIQMSGHLECKCENDLVLVNEETCE). EGF-like domains follow at residues 61 to 106 (KVLK…NVCI), 106 to 150 (IPNE…NKCS), and 153 to 193 (GETK…SICT). 9 disulfide bridges follow: C65–C80, C74–C92, C94–C105, C110–C120, C115–C133, C135–C149, C157–C168, C161–C177, and C179–C192. N112 carries N-linked (GlcNAc...) asparagine glycosylation. N-linked (GlcNAc...) asparagine glycans are attached at residues N165 and N187. S196 carries the GPI-anchor amidated serine lipid modification. Residues 197–217 (AYNILNLSIMFILFSVCFFIM) constitute a propeptide, removed in mature form. Residue N202 is glycosylated (N-linked (GlcNAc...) asparagine).

Its subcellular location is the cell membrane. The protein is 25 kDa ookinete surface antigen of Plasmodium falciparum (isolate NF54).